The chain runs to 318 residues: Porphobilinogen deaminase (318 aa).

S-(dipyrrolylmethanemethyl)cysteine is present on cysteine 241.

The protein belongs to the HMBS family. As to quaternary structure, monomer. Dipyrromethane serves as cofactor.

It catalyses the reaction 4 porphobilinogen + H2O = hydroxymethylbilane + 4 NH4(+). Its pathway is porphyrin-containing compound metabolism; protoporphyrin-IX biosynthesis; coproporphyrinogen-III from 5-aminolevulinate: step 2/4. In terms of biological role, tetrapolymerization of the monopyrrole PBG into the hydroxymethylbilane pre-uroporphyrinogen in several discrete steps. In Geobacter sulfurreducens (strain ATCC 51573 / DSM 12127 / PCA), this protein is Porphobilinogen deaminase.